The following is a 472-amino-acid chain: Na(+)/H(+) antiporter NhaA (472 aa).

The next 11 helical transmembrane spans lie at 48 to 68, 91 to 111, 129 to 149, 157 to 177, 185 to 205, 210 to 230, 237 to 257, 337 to 357, 374 to 394, 410 to 430, and 443 to 463; these read AGGI…NSAW, MSLH…VVGL, ALPV…YFAV, AGWG…LVLL, LIIF…LVIA, HEIS…LLLL, HAIP…HSGV, GPWV…GIDF, VCLG…WIAV, LLGV…ISQL, and LGIL…LYFG.

This sequence belongs to the NhaA Na(+)/H(+) (TC 2.A.33) antiporter family.

The protein resides in the cell inner membrane. The enzyme catalyses Na(+)(in) + 2 H(+)(out) = Na(+)(out) + 2 H(+)(in). Functionally, na(+)/H(+) antiporter that extrudes sodium in exchange for external protons. The chain is Na(+)/H(+) antiporter NhaA from Syntrophobacter fumaroxidans (strain DSM 10017 / MPOB).